The primary structure comprises 156 residues: Ribosomal RNA large subunit methyltransferase H (156 aa).

Residues Leu-73, Gly-104, and 123-128 (LSKLTL) each bind S-adenosyl-L-methionine.

This sequence belongs to the RNA methyltransferase RlmH family. In terms of assembly, homodimer.

It is found in the cytoplasm. It catalyses the reaction pseudouridine(1915) in 23S rRNA + S-adenosyl-L-methionine = N(3)-methylpseudouridine(1915) in 23S rRNA + S-adenosyl-L-homocysteine + H(+). Functionally, specifically methylates the pseudouridine at position 1915 (m3Psi1915) in 23S rRNA. This is Ribosomal RNA large subunit methyltransferase H from Idiomarina loihiensis (strain ATCC BAA-735 / DSM 15497 / L2-TR).